Consider the following 146-residue polypeptide: Leghemoglobin Lb120-8 (146 aa).

Positions 2–146 (GFTEKQEALV…LASAIKKAMN (145 aa)) constitute a Globin domain. Nitrated tyrosine occurs at positions 24 and 29. Ser-44 is a binding site for heme b. Ser-44 carries the post-translational modification Phosphoserine. An O2-binding site is contributed by His-61. Heme b-binding residues include Lys-64, His-93, and Lys-96. Tyr-134 carries the post-translational modification Nitrated tyrosine.

It belongs to the plant globin family. As to quaternary structure, monomer. In terms of processing, nitrated in effective nodules and particularly in hypoxic conditions; this mechanism may play a protective role in the symbiosis by buffering toxic peroxynitrite NO(2)(-). Nitration level decrease during nodule senescence. Phosphorylation at Ser-44 disrupts the molecular environment of its porphyrin ring oxygen binding pocket, thus leading to a reduced oxygen consumption and to the delivery of oxygen O(2) to symbiosomes. Root nodules.

The protein localises to the cytoplasm. Its subcellular location is the cytosol. The protein resides in the nucleus. Functionally, leghemoglobin that reversibly binds oxygen O(2) through a pentacoordinated heme iron. In root nodules, facilitates the diffusion of oxygen to the bacteroids while preventing the bacterial nitrogenase from being inactivated by buffering dioxygen, nitric oxide and carbon monoxide, and promoting the formation of reactive oxygen species (ROS, e.g. H(2)O(2)). This role is essential for symbiotic nitrogen fixation (SNF). The sequence is that of Leghemoglobin Lb120-8 from Pisum sativum (Garden pea).